We begin with the raw amino-acid sequence, 221 residues long: Glutathione peroxidase 6 (221 aa).

The N-terminal stretch at 1 to 19 (MFQQFQASCLVLFFLVGFA) is a signal peptide. Selenocysteine 73 is an active-site residue. Position 73 (selenocysteine 73) is a non-standard amino acid, selenocysteine.

This sequence belongs to the glutathione peroxidase family. In terms of tissue distribution, expressed in olfactory epithelium and embryos.

The protein resides in the secreted. It catalyses the reaction 2 glutathione + H2O2 = glutathione disulfide + 2 H2O. The polypeptide is Glutathione peroxidase 6 (GPX6) (Homo sapiens (Human)).